A 206-amino-acid polypeptide reads, in one-letter code: Xanthine phosphoribosyltransferase (206 aa).

Residues leucine 28 and asparagine 35 each coordinate xanthine. 136 to 140 lines the 5-phospho-alpha-D-ribose 1-diphosphate pocket; the sequence is ANGQA. Lysine 164 provides a ligand contact to xanthine.

It belongs to the purine/pyrimidine phosphoribosyltransferase family. Xpt subfamily. Homodimer.

It localises to the cytoplasm. The enzyme catalyses XMP + diphosphate = xanthine + 5-phospho-alpha-D-ribose 1-diphosphate. Its pathway is purine metabolism; XMP biosynthesis via salvage pathway; XMP from xanthine: step 1/1. Functionally, converts the preformed base xanthine, a product of nucleic acid breakdown, to xanthosine 5'-monophosphate (XMP), so it can be reused for RNA or DNA synthesis. In Oenococcus oeni (strain ATCC BAA-331 / PSU-1), this protein is Xanthine phosphoribosyltransferase.